Here is a 728-residue protein sequence, read N- to C-terminus: Polyribonucleotide nucleotidyltransferase (728 aa).

The Mg(2+) site is built by aspartate 513 and aspartate 519. The 61-residue stretch at 580–640 folds into the KH domain; that stretch reads PKVKMILIKP…EIVDLTVTYI (61 aa). Residues 650–724 form the S1 motif domain; it reads ENVYEVKILR…ERGQIDLSKK (75 aa).

This sequence belongs to the polyribonucleotide nucleotidyltransferase family. Requires Mg(2+) as cofactor.

Its subcellular location is the cytoplasm. The enzyme catalyses RNA(n+1) + phosphate = RNA(n) + a ribonucleoside 5'-diphosphate. Its function is as follows. Involved in mRNA degradation. Catalyzes the phosphorolysis of single-stranded polyribonucleotides processively in the 3'- to 5'-direction. The protein is Polyribonucleotide nucleotidyltransferase of Phytoplasma mali (strain AT).